A 118-amino-acid polypeptide reads, in one-letter code: MICOS complex subunit MIC13 (118 aa).

Residues 1–7 are Mitochondrial matrix-facing; it reads MVARVWS. The chain crosses the membrane as a helical span at residues 8-26; sequence LMRFLIKGSVAGGAVYLVY. Over 27–118 the chain is Mitochondrial intermembrane; it reads DQELLGPSDK…GWEYVKARTK (92 aa).

It belongs to the MICOS complex subunit Mic13 family. As to quaternary structure, component of the mitochondrial contact site and cristae organizing system (MICOS) complex, composed of at least MICOS10/MIC10, CHCHD3/MIC19, CHCHD6/MIC25, APOO/MIC26, MICOS13/MIC13, APOOL/MIC27 and IMMT/MIC60. The complex associates with mitochondrial outer membrane proteins SAMM50, MTX1 and MTX2, and with HSPA9.

The protein localises to the mitochondrion inner membrane. Functionally, component of the MICOS complex, a large protein complex of the mitochondrial inner membrane that plays crucial roles in the maintenance of crista junctions, inner membrane architecture, and formation of contact sites to the outer membrane. Constituent of mature MICOS complex, it is required for the formation of cristae junction (CJ) and maintenance of cristae morphology. Required for the incorporation of MICOS10/MIC10 into the MICOS complex. This is MICOS complex subunit MIC13 from Macaca fascicularis (Crab-eating macaque).